The sequence spans 444 residues: C4-dicarboxylate transport protein 2 (444 aa).

Transmembrane regions (helical) follow at residues 23-43 (ILYV…WLWP), 61-81 (LIKM…IAHI), 95-115 (LVYF…VANV), 162-182 (GEIL…MGLG), 198-218 (AMFG…FGAM), and 236-256 (LIAT…GIIA).

It belongs to the dicarboxylate/amino acid:cation symporter (DAACS) (TC 2.A.23) family.

Its subcellular location is the cell inner membrane. Functionally, responsible for the transport of dicarboxylates such as succinate, fumarate, and malate from the periplasm across the membrane. The protein is C4-dicarboxylate transport protein 2 of Bradyrhizobium diazoefficiens (strain JCM 10833 / BCRC 13528 / IAM 13628 / NBRC 14792 / USDA 110).